Consider the following 333-residue polypeptide: L-lactate dehydrogenase B chain (333 aa).

Residues 29 to 57 and R99 contribute to the NAD(+) site; that span reads GQVG…WEDK. Substrate-binding residues include R106, N138, and R169. NAD(+) is bound at residue N138. The active-site Proton acceptor is the H193. T248 provides a ligand contact to substrate.

It belongs to the LDH/MDH superfamily. LDH family. Homotetramer.

It localises to the cytoplasm. The catalysed reaction is (S)-lactate + NAD(+) = pyruvate + NADH + H(+). It functions in the pathway fermentation; pyruvate fermentation to lactate; (S)-lactate from pyruvate: step 1/1. In terms of biological role, interconverts simultaneously and stereospecifically pyruvate and lactate with concomitant interconversion of NADH and NAD(+). The polypeptide is L-lactate dehydrogenase B chain (LDHB) (Trachemys scripta elegans (Red-eared slider turtle)).